Consider the following 354-residue polypeptide: Homeobox protein Nkx-2.4 (354 aa).

The homeobox DNA-binding region spans 188–247 (RRKRRVLFSQAQVYELERRFKQQKYLSAPEREHLASMIHLTPTQVKIWFQNHRYKMKRQA). A disordered region spans residues 245 to 329 (RQAKDKAAQQ…PALHGPGGGL (85 aa)). Over residues 262-272 (GPPPPPPPPSP) the composition is skewed to pro residues. Residues 290 to 304 (GAGTPTPGQGGQQPQ) show a composition bias toward low complexity.

This sequence belongs to the NK-2 homeobox family. In the embryo it is detected in the posterior hypothalamus and later in the head. In the adult it is detected only in testis.

It is found in the nucleus. Probable transcription factor. The protein is Homeobox protein Nkx-2.4 (Nkx2-4) of Mus musculus (Mouse).